Consider the following 402-residue polypeptide: MKFREPLLGGSAAMPGASLQRACRLLVAVCALHLGVTLVYYLAGRDLRRLPQLVGVHPPLQGSSHGAAAIGQPSGELRLRGVAPPPPLQNSSKPRSRAPSNLDAYSHPGPGPGPGSNLTSAPVPSTTTRSLTACPEESPLLVGPMLIEFNIPVDLKLVEQQNPKVKLGGRYTPMDCISPHKVAIIIPFRNRQEHLKYWLYYLHPILQRQQLDYGIYVINQAGESMFNRAKLLNVGFKEALKDYDYNCFVFSDVDLIPMNDHNTYRCFSQPRHISVAMDKFGFSLPYVQYFGGVSALSKQQFLSINGFPNNYWGWGGEDDDIYNRLAFRGMSVSRPNAVIGKCRMIRHSRDKKNEPNPQRFDRIAHTKETMLSDGLNSLTYMVLEVQRYPLYTKITVDIGTPS.

At 1–24 the chain is on the cytoplasmic side; that stretch reads MKFREPLLGGSAAMPGASLQRACR. The chain crosses the membrane as a helical; Signal-anchor for type II membrane protein span at residues 25–44; it reads LLVAVCALHLGVTLVYYLAG. Topologically, residues 45–402 are lumenal; that stretch reads RDLRRLPQLV…KITVDIGTPS (358 aa). Residues 77-130 form a disordered region; that stretch reads LRLRGVAPPPPLQNSSKPRSRAPSNLDAYSHPGPGPGPGSNLTSAPVPSTTTRS. N90 and N117 each carry an N-linked (GlcNAc...) asparagine glycan. Positions 116–130 are enriched in polar residues; the sequence is SNLTSAPVPSTTTRS. C134 and C176 are oxidised to a cystine. UDP-alpha-D-galactose-binding positions include 187–191, 226–228, 253–254, and W314; these read PFRNR, FNR, and VD. C247 and C266 are joined by a disulfide. D254 is a Mn(2+) binding site. 316–319 provides a ligand contact to N-acetyl-D-glucosamine; it reads GEDD. Residue H347 participates in Mn(2+) binding. Residue 347–349 participates in UDP-alpha-D-galactose binding; the sequence is HSR. R359 serves as a coordination point for N-acetyl-D-glucosamine.

It belongs to the glycosyltransferase 7 family. In terms of assembly, homodimer; and heterodimer with alpha-lactalbumin to form lactose synthase. Interacts (via N-terminal cytoplasmic domain) with UBE2Q1 (via N-terminus); the interaction is direct. Mn(2+) is required as a cofactor. In terms of processing, the soluble form derives from the membrane forms by proteolytic processing. In terms of tissue distribution, detected in milk (at protein level).

It is found in the golgi apparatus. The protein resides in the golgi stack membrane. It localises to the cell membrane. The protein localises to the cell surface. Its subcellular location is the cell projection. It is found in the filopodium. The protein resides in the secreted. It catalyses the reaction D-glucose + UDP-alpha-D-galactose = lactose + UDP + H(+). The enzyme catalyses an N-acetyl-beta-D-glucosaminyl derivative + UDP-alpha-D-galactose = a beta-D-galactosyl-(1-&gt;4)-N-acetyl-beta-D-glucosaminyl derivative + UDP + H(+). It carries out the reaction N-acetyl-D-glucosamine + UDP-alpha-D-galactose = beta-D-galactosyl-(1-&gt;4)-N-acetyl-D-glucosamine + UDP + H(+). The catalysed reaction is a beta-D-GlcNAc-(1-&gt;3)-beta-D-Gal-(1-&gt;4)-beta-D-Glc-(1&lt;-&gt;1)-Cer(d18:1(4E)) + UDP-alpha-D-galactose = a neolactoside nLc4Cer(d18:1(4E)) + UDP + H(+). It catalyses the reaction a beta-D-glucosylceramide + UDP-alpha-D-galactose = a beta-D-galactosyl-(1-&gt;4)-beta-D-glucosyl-(1&lt;-&gt;1)-ceramide + UDP + H(+). The enzyme catalyses a neolactoside IV(3)-beta-GlcNAc-nLc4Cer + UDP-alpha-D-galactose = a neolactoside nLc6Cer + UDP + H(+). It functions in the pathway protein modification; protein glycosylation. The Golgi complex form catalyzes the production of lactose in the lactating mammary gland and could also be responsible for the synthesis of complex-type N-linked oligosaccharides in many glycoproteins as well as the carbohydrate moieties of glycolipids. In terms of biological role, the cell surface form functions as a recognition molecule during a variety of cell to cell and cell to matrix interactions, as those occurring during development and egg fertilization, by binding to specific oligosaccharide ligands on opposing cells or in the extracellular matrix. The secreted form is responsible for the synthesis of complex-type to N-linked oligosaccharides in many glycoproteins as well as the carbohydrate moieties of glycolipids. This chain is Beta-1,4-galactosyltransferase 1 (B4GALT1), found in Bos taurus (Bovine).